Reading from the N-terminus, the 373-residue chain is Chorismate synthase (373 aa).

NADP(+) contacts are provided by Arg-48 and Arg-54. FMN-binding positions include 131-133 (RSS), 243-244 (NA), Gly-288, 303-307 (KPTSS), and Arg-329.

It belongs to the chorismate synthase family. As to quaternary structure, homotetramer. FMNH2 serves as cofactor.

The catalysed reaction is 5-O-(1-carboxyvinyl)-3-phosphoshikimate = chorismate + phosphate. It participates in metabolic intermediate biosynthesis; chorismate biosynthesis; chorismate from D-erythrose 4-phosphate and phosphoenolpyruvate: step 7/7. Functionally, catalyzes the anti-1,4-elimination of the C-3 phosphate and the C-6 proR hydrogen from 5-enolpyruvylshikimate-3-phosphate (EPSP) to yield chorismate, which is the branch point compound that serves as the starting substrate for the three terminal pathways of aromatic amino acid biosynthesis. This reaction introduces a second double bond into the aromatic ring system. The protein is Chorismate synthase of Beijerinckia indica subsp. indica (strain ATCC 9039 / DSM 1715 / NCIMB 8712).